Here is a 1238-residue protein sequence, read N- to C-terminus: Protein MMS22-like (1238 aa).

It belongs to the MMS22 family. MMS22L subfamily. In terms of assembly, component of the MMS22L-TONSL complex, a complex at least composed of MMS22L and TONSL/NFKBIL2. Interacts with RAD51; interaction is direct. Post-translationally, degraded by the ubiquitin-proteasome system upon replication stress.

It localises to the nucleus. Its subcellular location is the chromosome. Functionally, component of the MMS22L-TONSL complex, a complex that promotes homologous recombination-mediated repair of double-strand breaks (DSBs) at stalled or collapsed replication forks. The MMS22L-TONSL complex is required to maintain genome integrity during DNA replication. It mediates the assembly of RAD51 filaments on single-stranded DNA (ssDNA): the MMS22L-TONSL complex is recruited to DSBs following histone replacement by histone chaperones and eviction of the replication protein A complex (RPA/RP-A) from DSBs. Following recruitment to DSBs, the TONSL-MMS22L complex promotes recruitment of RAD51 filaments and subsequent homologous recombination. Within the complex, MMS22L acts by binding ssDNA. The sequence is that of Protein MMS22-like (Mms22l) from Mus musculus (Mouse).